The chain runs to 213 residues: Lactobacillus shifted protein (213 aa).

A compositionally biased stretch (polar residues) spans 28–38; it reads PRFTENAMQPN. 2 disordered regions span residues 28 to 56 and 182 to 213; these read PRFT…DATP and PTSS…YEQR.

The sequence is that of Lactobacillus shifted protein (lbsA) from Emericella nidulans (strain FGSC A4 / ATCC 38163 / CBS 112.46 / NRRL 194 / M139) (Aspergillus nidulans).